An 808-amino-acid chain; its full sequence is Probable inorganic carbon transporter subunit DabA (808 aa).

The Zn(2+) site is built by Cys334, Asp336, His494, and Cys509.

It belongs to the inorganic carbon transporter (TC 9.A.2) DabA family. As to quaternary structure, forms a complex with DabB. The cofactor is Zn(2+).

The protein localises to the cell inner membrane. Functionally, part of an energy-coupled inorganic carbon pump. This chain is Probable inorganic carbon transporter subunit DabA, found in Allorhizobium ampelinum (strain ATCC BAA-846 / DSM 112012 / S4) (Agrobacterium vitis (strain S4)).